A 512-amino-acid chain; its full sequence is Ribose import ATP-binding protein RbsA (512 aa).

2 consecutive ABC transporter domains span residues 6–242 and 252–496; these read LELR…VNRE and VPAG…TGAQ. Position 38–45 (38–45) interacts with ATP; the sequence is GENGAGKS.

Belongs to the ABC transporter superfamily. Ribose importer (TC 3.A.1.2.1) family. The complex is composed of an ATP-binding protein (RbsA), two transmembrane proteins (RbsC) and a solute-binding protein (RbsB).

The protein localises to the cell inner membrane. It catalyses the reaction D-ribose(out) + ATP + H2O = D-ribose(in) + ADP + phosphate + H(+). Part of the ABC transporter complex RbsABC involved in ribose import. Responsible for energy coupling to the transport system. This is Ribose import ATP-binding protein RbsA from Pseudomonas putida (strain ATCC 47054 / DSM 6125 / CFBP 8728 / NCIMB 11950 / KT2440).